The primary structure comprises 700 residues: Dymeclin (700 aa).

The N-myristoyl glycine moiety is linked to residue G2. A Phosphoserine modification is found at S347.

Belongs to the dymeclin family.

The protein is Dymeclin of Drosophila pseudoobscura pseudoobscura (Fruit fly).